The chain runs to 366 residues: Phospho-N-acetylmuramoyl-pentapeptide-transferase (366 aa).

10 consecutive transmembrane segments (helical) span residues 3–23 (QIIISGSVAFLVSIFLTPILI), 55–75 (IAIIAGITIGYLVTNIYSYFA), 80–100 (FTASGLLVLGLMLGLGATGFA), 118–138 (AKLISQLAIALVFGLLVLRFP), 161–181 (IAFGGGVLGTIVFLIFIYVVV), 197–217 (LAAGATAFVMGAYTLIAFWQF), 238–258 (IAVLAAGGLGATLGFLWWNAA), 262–282 (IFMGDTGSLALGGLVAGISVV), 290–310 (VIIGALFVIEVASVAIQIAVF), and 341–361 (FWLIAIMAVIAGMAVFYGDWL).

This sequence belongs to the glycosyltransferase 4 family. MraY subfamily. Requires Mg(2+) as cofactor.

It localises to the cell membrane. It catalyses the reaction UDP-N-acetyl-alpha-D-muramoyl-L-alanyl-gamma-D-glutamyl-meso-2,6-diaminopimeloyl-D-alanyl-D-alanine + di-trans,octa-cis-undecaprenyl phosphate = di-trans,octa-cis-undecaprenyl diphospho-N-acetyl-alpha-D-muramoyl-L-alanyl-D-glutamyl-meso-2,6-diaminopimeloyl-D-alanyl-D-alanine + UMP. The protein operates within cell wall biogenesis; peptidoglycan biosynthesis. In terms of biological role, catalyzes the initial step of the lipid cycle reactions in the biosynthesis of the cell wall peptidoglycan: transfers peptidoglycan precursor phospho-MurNAc-pentapeptide from UDP-MurNAc-pentapeptide onto the lipid carrier undecaprenyl phosphate, yielding undecaprenyl-pyrophosphoryl-MurNAc-pentapeptide, known as lipid I. In Corynebacterium efficiens (strain DSM 44549 / YS-314 / AJ 12310 / JCM 11189 / NBRC 100395), this protein is Phospho-N-acetylmuramoyl-pentapeptide-transferase.